The chain runs to 240 residues: Membrane-spanning 4-domains subfamily A member 15 (240 aa).

Transmembrane regions (helical) follow at residues 73–93, 100–120, 144–164, and 173–193; these read VLGTVQILIGLIHLGFGSVLL, VGIFFIEGGVPFWGGACFIIS, ILSVMAAFAGTAILLMDFGVT, and LAVLTIFTVLEFFTAVIAMHF.

The protein belongs to the MS4A family.

The protein localises to the membrane. May be involved in signal transduction as a component of a multimeric receptor complex. This is Membrane-spanning 4-domains subfamily A member 15 (MS4A15) from Homo sapiens (Human).